We begin with the raw amino-acid sequence, 589 residues long: ATP-dependent lipid A-core flippase (589 aa).

Transmembrane regions (helical) follow at residues 37–57 (ALAI…PALL), 72–92 (LWLV…SGFL), 151–171 (IMKL…LVYL), 173–193 (WKLM…IQVL), 260–280 (SAIT…IALL), and 286–306 (TTTV…IAPV). The ABC transmembrane type-1 domain maps to 37–318 (ALAIGATIVA…LSDAATPVTR (282 aa)). The ABC transporter domain occupies 350 to 584 (IEFADVSVIY…NGAYAHLYRL (235 aa)). 384 to 391 (GASGSGKT) is a binding site for ATP.

The protein belongs to the ABC transporter superfamily. Lipid exporter (TC 3.A.1.106) family. In terms of assembly, homodimer.

It localises to the cell inner membrane. The catalysed reaction is ATP + H2O + lipid A-core oligosaccharideSide 1 = ADP + phosphate + lipid A-core oligosaccharideSide 2.. Its function is as follows. Involved in lipopolysaccharide (LPS) biosynthesis. Translocates lipid A-core from the inner to the outer leaflet of the inner membrane. Transmembrane domains (TMD) form a pore in the inner membrane and the ATP-binding domain (NBD) is responsible for energy generation. This is ATP-dependent lipid A-core flippase from Polaromonas sp. (strain JS666 / ATCC BAA-500).